Consider the following 288-residue polypeptide: MKDRTQELRTAKDSDDDDDVAVTVDRDRFMDEFFEQVEEIRGFIDKIAENVEEVKRKHSAILASPNPDEKTKEELEELMSDIKKTANKVRSKLKSIEQSIEQEEGLNRSSADLRIRKTQHSTLSRKFVEVMSEYNATQSDYRERCKGRIQRQLEITGRTTTSEELEDMLESGNPAIFASGIIMDSSISKQALSEIETRHSEIIKLENSIRELHDMFMDMAMLVESQGEMIDRIEYNVEHAVDYVERAVSDTKKAVKYQSKARRKKIMIIICCVILGIVIASTVGGIFA.

Topologically, residues methionine 1–lysine 265 are cytoplasmic. Phosphoserine is present on residues serine 14, serine 64, and serine 95. Residues aspartate 68–serine 109 adopt a coiled-coil conformation. The residue at position 188 (serine 188) is a Phosphoserine; by DAPK1. A t-SNARE coiled-coil homology domain is found at leucine 192–alanine 254. Glycyl lysine isopeptide (Lys-Gly) (interchain with G-Cter in SUMO) cross-links involve residues lysine 252, lysine 253, and lysine 256. A helical; Anchor for type IV membrane protein membrane pass occupies residues isoleucine 266–isoleucine 286. At phenylalanine 287 to alanine 288 the chain is on the extracellular side.

The protein belongs to the syntaxin family. As to quaternary structure, part of the SNARE core complex containing SNAP25, VAMP2 and STX1A; this complex constitutes the basic catalytic machinery of the complex neurotransmitter release apparatus. The SNARE complex interacts with CPLX1. Interacts with STXBP1. The interaction with STXBP1 promotes assembly of the SNARE complex. Interacts (via C-terminus) with KCNB1 (via C-terminus); the interaction increases in a calcium-dependent manner and induces a pore-independent enhancement of exocytosis in neuroendocrine cells, chromaffin cells, pancreatic beta cells and from the soma of dorsal root ganglia (DRG) neurons. Interacts with SYTL4. Interacts with STXBP6. Interacts with PLCL1 (via C2 domain). Interacts with OTOF. Interacts with LGI3. Interacts (via the H3 domain) with SLC6A4 (via the N-terminus); this interaction regulates SLC4A6 channel conductance in thalamocortical neurons. Interacts with SYT6 and SYT8; the interaction is Ca(2+)-dependent. Interacts with VAMP8. Interacts with SNAP23. Interacts with VAPA and SYBU. Interacts with PRRT2. Interacts with SEPT8. Interacts with STXBP5L. Interacts with synaptotagmin-1/SYT1. Interacts with SEPTIN5; in the cerebellar cortex. Interacts with SEPTIN4; in the striatum. Post-translationally, phosphorylated by CK2. Phosphorylation at Ser-188 by DAPK1 significantly decreases its interaction with STXBP1. In terms of processing, sumoylated, sumoylation is required for regulation of synaptic vesicle endocytosis. In terms of tissue distribution, highly expressed in embryonic spinal cord and ganglia and in adult cerebellum and cerebral cortex. As to expression, expressed in heart, liver, fat, skeletal muscle, kidney and brain.

It localises to the cytoplasmic vesicle. The protein resides in the secretory vesicle. Its subcellular location is the synaptic vesicle membrane. It is found in the synapse. The protein localises to the synaptosome. It localises to the cell membrane. The protein resides in the secreted. Functionally, plays an essential role in hormone and neurotransmitter calcium-dependent exocytosis and endocytosis. Part of the SNARE (Soluble NSF Attachment Receptor) complex composed of SNAP25, STX1A and VAMP2 which mediates the fusion of synaptic vesicles with the presynaptic plasma membrane. STX1A and SNAP25 are localized on the plasma membrane while VAMP2 resides in synaptic vesicles. The pairing of the three SNAREs from the N-terminal SNARE motifs to the C-terminal anchors leads to the formation of the SNARE complex, which brings membranes into close proximity and results in final fusion. Participates in the calcium-dependent regulation of acrosomal exocytosis in sperm. Also plays an important role in the exocytosis of hormones such as insulin or glucagon-like peptide 1 (GLP-1). The chain is Syntaxin-1A (STX1A) from Homo sapiens (Human).